We begin with the raw amino-acid sequence, 61 residues long: Tubulin alpha-4 chain (61 aa).

Q11 contributes to the GTP binding site. A disordered region spans residues 35 to 61 (QMPGDKTIGGGDAEFDEGEDGDEGDEY). The residue at position 40 (K40) is an N6-acetyllysine. The span at 47-61 (AEFDEGEDGDEGDEY) shows a compositional bias: acidic residues.

This sequence belongs to the tubulin family. In terms of assembly, dimer of alpha and beta chains. A typical microtubule is a hollow water-filled tube with an outer diameter of 25 nm and an inner diameter of 15 nM. Alpha-beta heterodimers associate head-to-tail to form protofilaments running lengthwise along the microtubule wall with the beta-tubulin subunit facing the microtubule plus end conferring a structural polarity. Microtubules usually have 13 protofilaments but different protofilament numbers can be found in some organisms and specialized cells. It depends on Mg(2+) as a cofactor. Post-translationally, undergoes a tyrosination/detyrosination cycle, the cyclic removal and re-addition of a C-terminal tyrosine residue by the enzymes tubulin tyrosine carboxypeptidase (TTCP) and tubulin tyrosine ligase (TTL), respectively. Acetylation of alpha chains at Lys-40 stabilizes microtubules and affects affinity and processivity of microtubule motors. This modification has a role in multiple cellular functions, ranging from cell motility, cell cycle progression or cell differentiation to intracellular trafficking and signaling.

The protein localises to the cytoplasm. It is found in the cytoskeleton. It catalyses the reaction GTP + H2O = GDP + phosphate + H(+). In terms of biological role, tubulin is the major constituent of microtubules, a cylinder consisting of laterally associated linear protofilaments composed of alpha- and beta-tubulin heterodimers. Microtubules grow by the addition of GTP-tubulin dimers to the microtubule end, where a stabilizing cap forms. Below the cap, tubulin dimers are in GDP-bound state, owing to GTPase activity of alpha-tubulin. The polypeptide is Tubulin alpha-4 chain (TUBA4) (Zea mays (Maize)).